A 187-amino-acid polypeptide reads, in one-letter code: Protein P18, mitochondrial (187 aa).

The N-terminal 17 residues, 1 to 17 (MRRLSSQLMCTAAAVRF), are a transit peptide targeting the mitochondrion. The disordered stretch occupies residues 160 to 187 (NAAKAKADGKEHPSTLAQQQSLFDIKIQ).

Its subcellular location is the mitochondrion inner membrane. Functionally, putative RNA-binding protein. The chain is Protein P18, mitochondrial from Leishmania tarentolae (Sauroleishmania tarentolae).